The primary structure comprises 583 residues: Transmembrane protein 108 (583 aa).

A helical transmembrane segment spans residues 7–27 (ALYCQLLSFLLTLALTEALVF). The interval 31 to 176 (EPSPRESLQV…ATIRRPPRPP (146 aa)) is interacts with SH3GL2. Disordered regions lie at residues 71 to 360 (VTPT…GVFA) and 376 to 404 (VPSE…STVS). 2 stretches are compositionally biased toward polar residues: residues 80-93 (PSSQ…TTTP) and 100-122 (PTNT…SLST). Over residues 177-187 (GSSRKGAGSSP) the composition is skewed to low complexity. The segment at 180 to 413 (RKGAGSSPRP…SQAEEKAVAT (234 aa)) is interacts with DST (isoform 1). 3 stretches are compositionally biased toward polar residues: residues 251-273 (YSSS…SWVP), 310-319 (ASGTPASQQR), and 333-357 (DGSS…TNSG). A helical transmembrane segment spans residues 477 to 497 (IAWVILAISVPISSCSVLLTV). The interval 498–583 (CCLRRKKKPA…FVGNDQVSEI (86 aa)) is interaction with CYFIP2.

Interacts with DST (isoform 1). Interacts with SH3GL2. Interacts (via N-terminus) with CYFIP1 and CYFIP2; the interactions associate TMEM108 with the WAVE1 complex. Post-translationally, glycosylated.

The protein localises to the membrane. Its subcellular location is the postsynaptic density. It localises to the endosome membrane. It is found in the cell projection. The protein resides in the axon. The protein localises to the dendrite. Its subcellular location is the early endosome. Functionally, transmembrane protein required for proper cognitive functions. Involved in the development of dentate gyrus (DG) neuron circuitry, is necessary for AMPA receptors surface expression and proper excitatory postsynaptic currents of DG granule neurons. Regulates the organization and stability of the microtubule network of sensory neurons to allow axonal transport. Through the interaction with DST, mediates the docking of the dynein/dynactin motor complex to vesicle cargos for retrograde axonal transport. In hippocampal neurons, required for BDNF-dependent dendrite outgrowth. Cooperates with SH3GL2 and recruits the WAVE1 complex to facilitate actin-dependent BDNF:NTRK2 early endocytic trafficking and mediate signaling from early endosomes. This is Transmembrane protein 108 from Bos taurus (Bovine).